The primary structure comprises 30 residues: Dendrotoxin B (30 aa).

The cysteines at positions 3 and 22 are disulfide-linked.

Belongs to the three-finger toxin family. Short-chain subfamily. Orphan group XI sub-subfamily. Contains 4 disulfide bonds. As to expression, expressed by the venom gland.

Its subcellular location is the secreted. Its function is as follows. Blocks voltage-gated potassium channels (Kv). This is the slowly inactivating phase of potassium efflux which is blocked by this toxin. The sequence is that of Dendrotoxin B from Dendroaspis angusticeps (Eastern green mamba).